A 31-amino-acid polypeptide reads, in one-letter code: Cytochrome b6-f complex subunit 6 (31 aa).

The chain crosses the membrane as a helical span at residues 4–24 (ILTYFGILFGILTITVIIFVA).

This sequence belongs to the PetL family. As to quaternary structure, the 4 large subunits of the cytochrome b6-f complex are cytochrome b6, subunit IV (17 kDa polypeptide, PetD), cytochrome f and the Rieske protein, while the 4 small subunits are PetG, PetL, PetM and PetN. The complex functions as a dimer.

The protein resides in the plastid. It localises to the chloroplast thylakoid membrane. In terms of biological role, component of the cytochrome b6-f complex, which mediates electron transfer between photosystem II (PSII) and photosystem I (PSI), cyclic electron flow around PSI, and state transitions. PetL is important for photoautotrophic growth as well as for electron transfer efficiency and stability of the cytochrome b6-f complex. The polypeptide is Cytochrome b6-f complex subunit 6 (Chaetosphaeridium globosum (Charophycean green alga)).